The following is a 612-amino-acid chain: Putative zinc metalloproteinase C607.06c (612 aa).

Residue His303 coordinates Zn(2+). Glu304 is an active-site residue. His307 and His313 together coordinate Zn(2+). The 136-residue stretch at Val477 to Lys612 folds into the Jacalin-type lectin domain.

The protein belongs to the peptidase M10B family. Requires Zn(2+) as cofactor.

The polypeptide is Putative zinc metalloproteinase C607.06c (Schizosaccharomyces pombe (strain 972 / ATCC 24843) (Fission yeast)).